A 282-amino-acid chain; its full sequence is Undecaprenyl-diphosphatase (282 aa).

6 consecutive transmembrane segments (helical) span residues 51–71 (TLVA…AAVI), 87–107 (MGWM…LFET), 115–135 (SLYW…LAEG), 191–211 (ATAA…AGLY), 229–249 (NILV…AFLL), and 259–279 (IFIA…ATGV).

It belongs to the UppP family.

The protein localises to the cell inner membrane. The catalysed reaction is di-trans,octa-cis-undecaprenyl diphosphate + H2O = di-trans,octa-cis-undecaprenyl phosphate + phosphate + H(+). Functionally, catalyzes the dephosphorylation of undecaprenyl diphosphate (UPP). Confers resistance to bacitracin. The polypeptide is Undecaprenyl-diphosphatase (Pelodictyon phaeoclathratiforme (strain DSM 5477 / BU-1)).